A 67-amino-acid chain; its full sequence is SPbeta prophage-derived uncharacterized protein YoqK (67 aa).

The protein is SPbeta prophage-derived uncharacterized protein YoqK (yoqK) of Bacillus subtilis (strain 168).